A 59-amino-acid chain; its full sequence is Large ribosomal subunit protein bL32B (59 aa).

The protein belongs to the bacterial ribosomal protein bL32 family.

The chain is Large ribosomal subunit protein bL32B (rpmF2) from Enterococcus faecalis (strain ATCC 700802 / V583).